We begin with the raw amino-acid sequence, 219 residues long: Ribose-5-phosphate isomerase A (219 aa).

Substrate contacts are provided by residues 28 to 31, 81 to 84, and 94 to 97; these read SGST, DGAD, and KGGG. The Proton acceptor role is filled by Glu-103. Position 121 (Lys-121) interacts with substrate.

The protein belongs to the ribose 5-phosphate isomerase family. As to quaternary structure, homodimer.

The enzyme catalyses aldehydo-D-ribose 5-phosphate = D-ribulose 5-phosphate. Its pathway is carbohydrate degradation; pentose phosphate pathway; D-ribose 5-phosphate from D-ribulose 5-phosphate (non-oxidative stage): step 1/1. In terms of biological role, catalyzes the reversible conversion of ribose-5-phosphate to ribulose 5-phosphate. This Histophilus somni (strain 129Pt) (Haemophilus somnus) protein is Ribose-5-phosphate isomerase A.